The chain runs to 407 residues: Chorismate synthase (407 aa).

Residues arginine 40 and arginine 46 each contribute to the NADP(+) site. FMN is bound by residues 138–140 (RAS) and 259–260 (QA). Basic and acidic residues predominate over residues 275 to 284 (RRGSRAHDEM). The tract at residues 275 to 308 (RRGSRAHDEMYPGTDGVVRSTNRAGGLEGGMTNG) is disordered. FMN contacts are provided by residues glycine 303, 318–322 (KPIST), and arginine 344.

This sequence belongs to the chorismate synthase family. In terms of assembly, homotetramer. The cofactor is FMNH2.

It catalyses the reaction 5-O-(1-carboxyvinyl)-3-phosphoshikimate = chorismate + phosphate. It functions in the pathway metabolic intermediate biosynthesis; chorismate biosynthesis; chorismate from D-erythrose 4-phosphate and phosphoenolpyruvate: step 7/7. In terms of biological role, catalyzes the anti-1,4-elimination of the C-3 phosphate and the C-6 proR hydrogen from 5-enolpyruvylshikimate-3-phosphate (EPSP) to yield chorismate, which is the branch point compound that serves as the starting substrate for the three terminal pathways of aromatic amino acid biosynthesis. This reaction introduces a second double bond into the aromatic ring system. The protein is Chorismate synthase of Mycobacterium marinum (strain ATCC BAA-535 / M).